A 239-amino-acid polypeptide reads, in one-letter code: Endolytic peptidoglycan transglycosylase RlpA (239 aa).

Residues 1–25 (MTLTRKTLFLLTAAFGTHSLQTASA) form the signal peptide. The region spanning 160 to 239 (VAENKDIFID…GMVRAVLTAG (80 aa)) is the SPOR domain.

The protein belongs to the RlpA family.

In terms of biological role, lytic transglycosylase with a strong preference for naked glycan strands that lack stem peptides. The polypeptide is Endolytic peptidoglycan transglycosylase RlpA (Neisseria meningitidis serogroup B (strain ATCC BAA-335 / MC58)).